The following is a 240-amino-acid chain: Proteasome subunit beta type-1 (240 aa).

Position 1 is an N-acetylmethionine (Met1). Positions 1 to 27 (MLSTAAYRDPDRELVMGPQGSAGPVQM) are excised as a propeptide. The O-linked (GlcNAc) serine glycan is linked to Ser57. Residues Ser61 and Ser67 each carry the phosphoserine modification. The residue at position 149 (Tyr149) is a Phosphotyrosine. Ser161 carries the phosphoserine modification. The residue at position 203 (Lys203) is an N6-acetyllysine. O-linked (GlcNAc) serine glycosylation occurs at Ser208.

Belongs to the peptidase T1B family. The 26S proteasome consists of a 20S proteasome core and two 19S regulatory subunits. The 20S proteasome core is a barrel-shaped complex made of 28 subunits that are arranged in four stacked rings. The two outer rings are each formed by seven alpha subunits, and the two inner rings are formed by seven beta subunits. The proteolytic activity is exerted by three beta-subunits PSMB5, PSMB6 and PSMB7. Interacts with SERPINB2. Interacts with RFPL4A. Ubiquitous.

Its subcellular location is the cytoplasm. It is found in the nucleus. Non-catalytic component of the 20S core proteasome complex involved in the proteolytic degradation of most intracellular proteins. This complex plays numerous essential roles within the cell by associating with different regulatory particles. Associated with two 19S regulatory particles, forms the 26S proteasome and thus participates in the ATP-dependent degradation of ubiquitinated proteins. The 26S proteasome plays a key role in the maintenance of protein homeostasis by removing misfolded or damaged proteins that could impair cellular functions, and by removing proteins whose functions are no longer required. Associated with the PA200 or PA28, the 20S proteasome mediates ubiquitin-independent protein degradation. This type of proteolysis is required in several pathways including spermatogenesis (20S-PA200 complex) or generation of a subset of MHC class I-presented antigenic peptides (20S-PA28 complex). The chain is Proteasome subunit beta type-1 (Psmb1) from Rattus norvegicus (Rat).